Here is a 204-residue protein sequence, read N- to C-terminus: Transcriptional regulator GfcR (204 aa).

This sequence belongs to the purine/pyrimidine phosphoribosyltransferase family. GfcR subfamily.

The sequence is that of Transcriptional regulator GfcR from Methanosarcina mazei (strain ATCC BAA-159 / DSM 3647 / Goe1 / Go1 / JCM 11833 / OCM 88) (Methanosarcina frisia).